We begin with the raw amino-acid sequence, 330 residues long: MKKPIVAVIAGGYSGEHSVSLKSAAGILSWLGSEPFSAFLVLIERDRWSVRVSEQREVPLDKNDFSFDLDDERIRFDYAYITIHGTPGENGLLQGYLDMIGIPYNTGDTLVESLTFNKYVCNRFLSGFGIRIADSMRLTGRDTQPDVADLTARMGLPLFVKPNVGGSSIATTKVVEAAQLLPAIGQAFSEGEEVMIERLICGTEVTCGAFLRKKEVVALPVTEVVAHNEFFDFDAKYNGAVEEITPARISDEATRLIQTMTARIYELLNARGIIRVDYIIEADGIPTLLEVNTTPGMTPTSFIPQQVRAAEMDMKEVLCTIIRDGLNETQ.

In terms of domain architecture, ATP-grasp spans 122 to 323 (NRFLSGFGIR…MKEVLCTIIR (202 aa)). 151 to 206 (TARMGLPLFVKPNVGGSSIATTKVVEAAQLLPAIGQAFSEGEEVMIERLICGTEVT) provides a ligand contact to ATP. The Mg(2+) site is built by D277, E290, and N292.

This sequence belongs to the D-alanine--D-alanine ligase family. The cofactor is Mg(2+). It depends on Mn(2+) as a cofactor.

It is found in the cytoplasm. It carries out the reaction 2 D-alanine + ATP = D-alanyl-D-alanine + ADP + phosphate + H(+). Its pathway is cell wall biogenesis; peptidoglycan biosynthesis. Cell wall formation. The protein is D-alanine--D-alanine ligase of Porphyromonas gingivalis (strain ATCC 33277 / DSM 20709 / CIP 103683 / JCM 12257 / NCTC 11834 / 2561).